Reading from the N-terminus, the 505-residue chain is MEEFQGHIELDRSWQDNFFYPLIFQEYIYAFAYDHGLNKSILLENAGDKKYSLLIVKRLITRMYQQNHLILSANDSNQNEFFGHKHKKNLYSQMISEGFAVIVEIPFSLLLISSLEGKEIVKSPNLRSIHSIFPFFEDKFLHLNYVLDILIPYPAHLEILVQTLRYWVKDASSLHLLRFFLYEYRNWNSLSIPKESIYIFSKRNQRLFLFLYNFHVCEYESIFVFLRNQSSHLRSTSFGALLERIHFYGKLEYLVNVFTKDFGVILWLFKEPFPHYVRYQGKSILASKGTSLLMHKWKYYLIHFWQCHFSVWSQPRRIYINRLSNHSLDFMGFFSSVRLNSSVVRSQMLENSFLIDNTIMKFDTIIPIIPLIGSLAKAKFCNVLGHPISKSVWTDLSDSDIIDRFGRICKNLSHYYSGSSRKKSLYRIKYILRLSCARTLARKHKSTVRAFLKRLGSEFLEEFFTEEEKVLSLILPRDSFTSRELYRGRFWYFDIICIHNLANDE.

Belongs to the intron maturase 2 family. MatK subfamily.

It localises to the plastid. The protein resides in the chloroplast. Its function is as follows. Usually encoded in the trnK tRNA gene intron. Probably assists in splicing its own and other chloroplast group II introns. This Phaulothamnus spinescens (Snake-eyes) protein is Maturase K.